A 487-amino-acid chain; its full sequence is Ribosomal protein uS12 methylthiotransferase RimO (487 aa).

An MTTase N-terminal domain is found at 38–149; that stretch reads PTVAFAHLGC…IVEVLEQVEA (112 aa). The [4Fe-4S] cluster site is built by cysteine 47, cysteine 83, cysteine 112, cysteine 187, cysteine 191, and cysteine 194. Positions 173 to 402 constitute a Radical SAM core domain; it reads TTSEAVAYLK…MEAQQAISAE (230 aa). The region spanning 405–476 is the TRAM domain; the sequence is GAWVGRIVDV…IYDLEGEVVG (72 aa).

The protein belongs to the methylthiotransferase family. RimO subfamily. Requires [4Fe-4S] cluster as cofactor.

The protein localises to the cytoplasm. It catalyses the reaction L-aspartate(89)-[ribosomal protein uS12]-hydrogen + (sulfur carrier)-SH + AH2 + 2 S-adenosyl-L-methionine = 3-methylsulfanyl-L-aspartate(89)-[ribosomal protein uS12]-hydrogen + (sulfur carrier)-H + 5'-deoxyadenosine + L-methionine + A + S-adenosyl-L-homocysteine + 2 H(+). Functionally, catalyzes the methylthiolation of an aspartic acid residue of ribosomal protein uS12. The protein is Ribosomal protein uS12 methylthiotransferase RimO of Synechococcus sp. (strain RCC307).